We begin with the raw amino-acid sequence, 233 residues long: Large ribosomal subunit protein uL1 (233 aa).

This sequence belongs to the universal ribosomal protein uL1 family. Part of the 50S ribosomal subunit.

Its function is as follows. Binds directly to 23S rRNA. The L1 stalk is quite mobile in the ribosome, and is involved in E site tRNA release. In terms of biological role, protein L1 is also a translational repressor protein, it controls the translation of the L11 operon by binding to its mRNA. The protein is Large ribosomal subunit protein uL1 of Shewanella woodyi (strain ATCC 51908 / MS32).